The following is a 563-amino-acid chain: Methylcrotonoyl-CoA carboxylase beta chain, mitochondrial (563 aa).

The transit peptide at 1 to 22 (MWAVLRLALRPCARASPAGPRA) directs the protein to the mitochondrion. The region spanning 49–306 (MKALVNQLHE…QKKLDVTIEP (258 aa)) is the CoA carboxyltransferase N-terminal domain. A carboxyltransferase region spans residues 49–555 (MKALVNQLHE…SAALNAPIEK (507 aa)). An N6-acetyllysine; alternate modification is found at Lys-70. Position 70 is an N6-succinyllysine; alternate (Lys-70). Residue Lys-141 is modified to N6-succinyllysine. In terms of domain architecture, CoA carboxyltransferase C-terminal spans 309 to 555 (EPLFPADELY…SAALNAPIEK (247 aa)). Residues 343-372 (RFTEFKAFYGDTLVTGFARIFGYPVGIVGN) are acyl-CoA binding. Lys-495 is modified (N6-acetyllysine; alternate). Position 495 is an N6-succinyllysine; alternate (Lys-495). Lys-511 is subject to N6-acetyllysine.

It belongs to the AccD/PCCB family. In terms of assembly, probably a dodecamer composed of six biotin-containing alpha subunits (MCCC1) and six beta (MCCC2) subunits.

The protein localises to the mitochondrion matrix. The catalysed reaction is 3-methylbut-2-enoyl-CoA + hydrogencarbonate + ATP = 3-methyl-(2E)-glutaconyl-CoA + ADP + phosphate + H(+). Its pathway is amino-acid degradation; L-leucine degradation; (S)-3-hydroxy-3-methylglutaryl-CoA from 3-isovaleryl-CoA: step 2/3. Functionally, carboxyltransferase subunit of the 3-methylcrotonyl-CoA carboxylase, an enzyme that catalyzes the conversion of 3-methylcrotonyl-CoA to 3-methylglutaconyl-CoA, a critical step for leucine and isovaleric acid catabolism. The protein is Methylcrotonoyl-CoA carboxylase beta chain, mitochondrial (MCCC2) of Homo sapiens (Human).